The primary structure comprises 283 residues: 5'-nucleotidase SurE (283 aa).

A divalent metal cation-binding residues include aspartate 14, aspartate 15, serine 47, and asparagine 105.

It belongs to the SurE nucleotidase family. It depends on a divalent metal cation as a cofactor.

It is found in the cytoplasm. The catalysed reaction is a ribonucleoside 5'-phosphate + H2O = a ribonucleoside + phosphate. In terms of biological role, nucleotidase that shows phosphatase activity on nucleoside 5'-monophosphates. This chain is 5'-nucleotidase SurE, found in Chlamydia muridarum (strain MoPn / Nigg).